A 356-amino-acid polypeptide reads, in one-letter code: Cyclin-D1-binding protein 1 (356 aa).

Residue Ala-2 is modified to N-acetylalanine. Interaction with TCF3 stretches follow at residues 2–181 and 147–356; these read ASST…VDFV and ISCN…AAEL. Positions 2–187 are interaction with RPLP0; it reads ASSTAAVPFL…VDFVKDAHEE (186 aa). Positions 2 to 205 are required for interaction with CCND1; sequence ASSTAAVPFL…DPYSGLLNDS (204 aa). Positions 198–224 are disordered; it reads YSGLLNDSEDNSDSHSDEDGVLGLPSN. The tract at residues 236–356 is interaction with RPLP0; the sequence is LIIPCLALVR…KALTQRAAEL (121 aa).

This sequence belongs to the CCNDBP1 family. Interacts with CCND1 and GRAP2. May also interact with COPS5, RPLP0, SIRT6, SYF2 and TCF3. Post-translationally, phosphorylated. In terms of tissue distribution, expressed at high levels in brain, intestine, muscle and ovary and at lower levels in heart, kidney, liver, lung, spleen and testis.

The protein resides in the cytoplasm. The protein localises to the nucleus. May negatively regulate cell cycle progression. May act at least in part via inhibition of the cyclin-D1/CDK4 complex, thereby preventing phosphorylation of RB1 and blocking E2F-dependent transcription. May be required for hepatocyte proliferation. The chain is Cyclin-D1-binding protein 1 (Ccndbp1) from Mus musculus (Mouse).